The chain runs to 381 residues: uncharacterized protein (381 aa).

Positions 331–340 (MQNGYANNGR) are enriched in polar residues. The segment at 331–381 (MQNGYANNGRNHQRERFERPEKNSKKNKFLPFNGSNKEKKRDKLKKNCVIM) is disordered. The segment covering 342 to 354 (HQRERFERPEKNS) has biased composition (basic and acidic residues). Residues 372 to 381 (DKLKKNCVIM) show a composition bias toward basic residues.

The protein resides in the cytoplasm. It is found in the nucleus. This is an uncharacterized protein from Saccharomyces cerevisiae (strain ATCC 204508 / S288c) (Baker's yeast).